The chain runs to 165 residues: Protein eva-1 homolog B (165 aa).

Residues 29–49 traverse the membrane as a helical segment; it reads GLYFVLGVCFGLLLTLCLLVI. 2 disordered regions span residues 57–109 and 143–165; these read PRPR…GPLN and LLGTGTLGPSPTATGTLGRMHYY. Positions 74–84 are enriched in acidic residues; the sequence is EPEDDDEDEED. Residues Thr-85, Thr-148, and Thr-158 each carry the phosphothreonine modification.

This sequence belongs to the EVA1 family.

The protein resides in the membrane. In Homo sapiens (Human), this protein is Protein eva-1 homolog B (EVA1B).